A 160-amino-acid polypeptide reads, in one-letter code: Large ribosomal subunit protein uL16 (160 aa).

A disordered region spans residues 138–160; it reads KNLENSSQENTKDSKKSQEEVKQ. The span at 147-160 shows a compositional bias: basic and acidic residues; the sequence is NTKDSKKSQEEVKQ.

Belongs to the universal ribosomal protein uL16 family. Part of the 50S ribosomal subunit.

Functionally, binds 23S rRNA and is also seen to make contacts with the A and possibly P site tRNAs. This Prochlorococcus marinus (strain AS9601) protein is Large ribosomal subunit protein uL16.